A 323-amino-acid chain; its full sequence is Elongation factor P--(R)-beta-lysine ligase (323 aa).

76–78 (SPE) lines the substrate pocket. ATP-binding positions include 100 to 102 (RNE) and Asn-109. Substrate is bound at residue Tyr-118. 242 to 243 (EL) contacts ATP. Position 249 (Glu-249) interacts with substrate. Gly-298 contacts ATP.

This sequence belongs to the class-II aminoacyl-tRNA synthetase family. EpmA subfamily. As to quaternary structure, homodimer.

It carries out the reaction D-beta-lysine + L-lysyl-[protein] + ATP = N(6)-((3R)-3,6-diaminohexanoyl)-L-lysyl-[protein] + AMP + diphosphate + H(+). In terms of biological role, with EpmB is involved in the beta-lysylation step of the post-translational modification of translation elongation factor P (EF-P). Catalyzes the ATP-dependent activation of (R)-beta-lysine produced by EpmB, forming a lysyl-adenylate, from which the beta-lysyl moiety is then transferred to the epsilon-amino group of a conserved specific lysine residue in EF-P. The protein is Elongation factor P--(R)-beta-lysine ligase of Actinobacillus succinogenes (strain ATCC 55618 / DSM 22257 / CCUG 43843 / 130Z).